Here is a 542-residue protein sequence, read N- to C-terminus: Berberine bridge enzyme-like 25 (542 aa).

Positions 1–30 (MGNSKPLPTISCISVFALYFSFYTITLTSS) are cleaved as a signal peptide. An intrachain disulfide couples Cys40 to Cys104. The N-linked (GlcNAc...) asparagine glycan is linked to Asn61. The 177-residue stretch at 82–258 (TMPKPGFIFK…LSWKIKLVPV (177 aa)) folds into the FAD-binding PCMH-type domain. A Pros-8alpha-FAD histidine modification is found at His119. Residues Asn308 and Asn436 are each glycosylated (N-linked (GlcNAc...) asparagine).

Belongs to the oxygen-dependent FAD-linked oxidoreductase family. FAD is required as a cofactor.

The protein resides in the secreted. The protein localises to the cell wall. This is Berberine bridge enzyme-like 25 from Arabidopsis thaliana (Mouse-ear cress).